The chain runs to 360 residues: SPRY domain-containing SOCS box protein 3 (360 aa).

The disordered stretch occupies residues 20–55 (RDQDARSPTLPAEEEAWGYDSDGQHSNSDSDTDLLH). Residues 85–274 (LHTFHQIKSC…MKVIRSCCCR (190 aa)) form the B30.2/SPRY domain. Positions 264–315 (SMKVIRSCCCRTSLQYLCCARLRQLLPDSVDSLEVLPLPPGLKQVLGNKLGW) constitute an SOCS box domain. A disordered region spans residues 323–350 (RSNQHKGDTSATTSCGSDSDSSCTPGQD). Low complexity predominate over residues 331-346 (TSATTSCGSDSDSSCT).

It belongs to the SPSB family. In terms of assembly, substrate-recognition component of the ECS(SPSB3) complex, composed of spsb3, cul5, elob, elob and rnf7/rbx2.

Its subcellular location is the nucleus. The protein operates within protein modification; protein ubiquitination. Functionally, substrate-recognition component of a cullin-5-RING E3 ubiquitin-protein ligase complex (ECS complex, also named CRL5 complex), which mediates the ubiquitination and subsequent proteasomal degradation of target proteins. This chain is SPRY domain-containing SOCS box protein 3 (spsb3), found in Xenopus tropicalis (Western clawed frog).